Consider the following 296-residue polypeptide: Urease operon transcriptional activator (296 aa).

The HTH araC/xylS-type domain occupies 171–268; that stretch reads QAITHLITQE…NMTPSQFRLQ (98 aa). 2 consecutive DNA-binding regions (H-T-H motif) follow at residues 188–209 and 235–258; these read DDVA…NREG and VFQI…KRKY.

In terms of biological role, positive regulator of the expression of the urease operon. The polypeptide is Urease operon transcriptional activator (ureR) (Escherichia coli).